Consider the following 366-residue polypeptide: Peptide chain release factor 2 (366 aa).

Gln-251 is subject to N5-methylglutamine.

It belongs to the prokaryotic/mitochondrial release factor family. In terms of processing, methylated by PrmC. Methylation increases the termination efficiency of RF2.

It localises to the cytoplasm. Peptide chain release factor 2 directs the termination of translation in response to the peptide chain termination codons UGA and UAA. This is Peptide chain release factor 2 (prfB) from Listeria innocua serovar 6a (strain ATCC BAA-680 / CLIP 11262).